A 438-amino-acid chain; its full sequence is Cell division cycle-associated 7-like protein (438 aa).

Residues 9 to 33 (IPKEVADIFSAPSDDEEFVGFQDDV) carry the Integrase domain-binding motif 1 (IBM1) motif. Ser-21 carries the post-translational modification Phosphoserine. A PSIP1-binding region spans residues 56–115 (VCFRSKYFTEELRRIFKEDTDSEMEDFEGFTESELNMSSNPELMESELSDSDKAYPVMND). An Integrase domain-binding motif 2 (IBM2) motif is present at residues 63 to 89 (FTEELRRIFKEDTDSEMEDFEGFTESE). A disordered region spans residues 74 to 199 (DTDSEMEDFE…ESRAESQENS (126 aa)). Phosphothreonine is present on Thr-75. Residues 75–86 (TDSEMEDFEGFT) are compositionally biased toward acidic residues. At Ser-77 the chain carries Phosphoserine. A Phosphothreonine modification is found at Thr-86. Phosphoserine is present on residues Ser-101, Ser-104, Ser-135, Ser-136, and Ser-159. The span at 152-167 (RTPDKDSSHLLDSKTD) shows a compositional bias: basic and acidic residues. Residues 168–177 (LRRKKSSRQP) are compositionally biased toward basic residues. Ser-183 and Ser-185 each carry phosphoserine. The segment at 201–223 (ALLKRAMNIKENKAMLAQLLAEL) is MYC-binding. Glycyl lysine isopeptide (Lys-Gly) (interchain with G-Cter in SUMO2) cross-links involve residues Lys-210 and Lys-213. The residue at position 249 (Ser-249) is a Phosphoserine.

In terms of assembly, interacts with MYC. Interacts (via IBM motifs) with PSIP1 (via IBD domain); phosphorylation increases its affinity for PSIP1. In terms of processing, phosphorylation increases its interaction with PSIP1. As to expression, expressed in all tissues but not detected in total brain.

The protein localises to the cytoplasm. It localises to the nucleus. Plays a role in transcriptional regulation as a repressor that inhibits monoamine oxidase A (MAOA) activity and gene expression by binding to the promoter. Plays an important oncogenic role in mediating the full transforming effect of MYC in medulloblastoma cells. Involved in apoptotic signaling pathways; May act downstream of P38-kinase and BCL-2, but upstream of CASP3/caspase-3 as well as CCND1/cyclin D1 and E2F1. This Mus musculus (Mouse) protein is Cell division cycle-associated 7-like protein (Cdca7l).